The following is a 492-amino-acid chain: N-succinylglutamate 5-semialdehyde dehydrogenase (492 aa).

Residue 220–225 coordinates NAD(+); that stretch reads GSANTG. Active-site residues include Glu-243 and Cys-277.

Belongs to the aldehyde dehydrogenase family. AstD subfamily.

The catalysed reaction is N-succinyl-L-glutamate 5-semialdehyde + NAD(+) + H2O = N-succinyl-L-glutamate + NADH + 2 H(+). The protein operates within amino-acid degradation; L-arginine degradation via AST pathway; L-glutamate and succinate from L-arginine: step 4/5. Its function is as follows. Catalyzes the NAD-dependent reduction of succinylglutamate semialdehyde into succinylglutamate. In Escherichia coli O7:K1 (strain IAI39 / ExPEC), this protein is N-succinylglutamate 5-semialdehyde dehydrogenase.